The primary structure comprises 865 residues: Prominin-1 (865 aa).

A signal peptide spans 1-19; it reads MALVLGSLLLLGLCGNSFS. The Extracellular portion of the chain corresponds to 20 to 108; it reads GGQPSSTDAP…GLKIVYYEAG (89 aa). Residues 109–129 traverse the membrane as a helical segment; the sequence is IILCCVLGLLFIILMPLVGYF. The Cytoplasmic segment spans residues 130–157; sequence FCMCRCCNKCGGEMHQRQKENGPFLRKC. The helical transmembrane segment at 158 to 178 threads the bilayer; the sequence is FAISLLVICIIISIGIFYGFV. At 179–433 the chain is on the extracellular side; it reads ANHQVRTRIK…LPTLEEYDSY (255 aa). An N-linked (GlcNAc...) asparagine glycan is attached at asparagine 220. Lysine 225, lysine 257, and lysine 264 each carry N6-acetyllysine. Residues asparagine 274, asparagine 395, and asparagine 414 are each glycosylated (N-linked (GlcNAc...) asparagine). Residues 434–454 form a helical membrane-spanning segment; it reads WWLGGLVICSLLTLIVIFYYL. Residues 455 to 486 lie on the Cytoplasmic side of the membrane; the sequence is GLLCGVCGYDRHATPTTRGCVSNTGGVFLMVG. The helical transmembrane segment at 487–507 threads the bilayer; the sequence is VGLSFLFCWILMIIVVLTFVF. The Extracellular segment spans residues 508–792; the sequence is GANVEKLICE…LCSYIIDPLN (285 aa). N-linked (GlcNAc...) asparagine glycosylation is found at asparagine 548, asparagine 580, asparagine 729, and asparagine 730. Residues 793 to 813 traverse the membrane as a helical segment; the sequence is LFWFGIGKATVFLLPALIFAV. At 814–865 the chain is on the cytoplasmic side; that stretch reads KLAKYYRRMDSEDVYDDVETIPMKNMENGNNGYHKDHVYGIHNPVMTSPSQH. At serine 863 the chain carries Phosphoserine.

The protein belongs to the prominin family. As to quaternary structure, interacts with CDHR1 and with actin filaments. Interacts with NAT8 and NAT8B. Post-translationally, isoform 1 and isoform 2 are glycosylated. Acetylation at Lys-225, Lys-257 and Lys-264 by NAT8 and NAT8B may control PROM1 protein expression and its function in cell apoptosis. In terms of tissue distribution, isoform 1 is selectively expressed on CD34 hematopoietic stem and progenitor cells in adult and fetal bone marrow, fetal liver, cord blood and adult peripheral blood. Isoform 1 is not detected on other blood cells. Isoform 1 is also expressed in a number of non-lymphoid tissues including retina, pancreas, placenta, kidney, liver, lung, brain and heart. Found in saliva within small membrane particles. Isoform 2 is predominantly expressed in fetal liver, skeletal muscle, kidney, and heart as well as adult pancreas, kidney, liver, lung, and placenta. Isoform 2 is highly expressed in fetal liver, low in bone marrow, and barely detectable in peripheral blood. Isoform 2 is expressed on hematopoietic stem cells and in epidermal basal cells (at protein level). Expressed in adult retina by rod and cone photoreceptor cells (at protein level).

Its subcellular location is the apical cell membrane. It localises to the cell projection. It is found in the microvillus membrane. The protein resides in the cilium. The protein localises to the photoreceptor outer segment. Its subcellular location is the endoplasmic reticulum. It localises to the endoplasmic reticulum-Golgi intermediate compartment. Functionally, may play a role in cell differentiation, proliferation and apoptosis. Binds cholesterol in cholesterol-containing plasma membrane microdomains and may play a role in the organization of the apical plasma membrane in epithelial cells. During early retinal development acts as a key regulator of disk morphogenesis. Involved in regulation of MAPK and Akt signaling pathways. In neuroblastoma cells suppresses cell differentiation such as neurite outgrowth in a RET-dependent manner. The chain is Prominin-1 (PROM1) from Homo sapiens (Human).